The primary structure comprises 325 residues: Tagatose 1,6-diphosphate aldolase 1 (325 aa).

The protein belongs to the aldolase LacD family.

It catalyses the reaction D-tagatofuranose 1,6-bisphosphate = D-glyceraldehyde 3-phosphate + dihydroxyacetone phosphate. It participates in carbohydrate metabolism; D-tagatose 6-phosphate degradation; D-glyceraldehyde 3-phosphate and glycerone phosphate from D-tagatose 6-phosphate: step 2/2. The polypeptide is Tagatose 1,6-diphosphate aldolase 1 (lacD1) (Streptococcus mutans serotype c (strain ATCC 700610 / UA159)).